The sequence spans 185 residues: Ribosome-recycling factor (185 aa).

This sequence belongs to the RRF family.

Its subcellular location is the cytoplasm. Its function is as follows. Responsible for the release of ribosomes from messenger RNA at the termination of protein biosynthesis. May increase the efficiency of translation by recycling ribosomes from one round of translation to another. This Thermosipho africanus (strain TCF52B) protein is Ribosome-recycling factor.